The sequence spans 284 residues: ATP synthase subunit beta, chloroplastic (284 aa).

It belongs to the ATPase alpha/beta chains family. F-type ATPases have 2 components, CF(1) - the catalytic core - and CF(0) - the membrane proton channel. CF(1) has five subunits: alpha(3), beta(3), gamma(1), delta(1), epsilon(1). CF(0) has four main subunits: a(1), b(1), b'(1) and c(9-12).

The protein resides in the plastid. The protein localises to the chloroplast thylakoid membrane. It catalyses the reaction ATP + H2O + 4 H(+)(in) = ADP + phosphate + 5 H(+)(out). Functionally, produces ATP from ADP in the presence of a proton gradient across the membrane. The catalytic sites are hosted primarily by the beta subunits. This is ATP synthase subunit beta, chloroplastic (atpB) from Asplenium nidus (Bird's nest fern).